The following is a 548-amino-acid chain: mRNA cleavage and polyadenylation factor CLP1 (548 aa).

Residues Glu-19, Lys-60, and 123 to 128 (SSGKTT) each bind ATP. Residues 437-478 (ESEVKEEVKEEKNEKDGEIKQDGEGEKKGEGKGEGEGEGEGK) are compositionally biased toward basic and acidic residues. The tract at residues 437–500 (ESEVKEEVKE…DEEEVPFREE (64 aa)) is disordered. Positions 479–494 (DGEEEGEAEGEDDEEE) are enriched in acidic residues.

Belongs to the Clp1 family. Clp1 subfamily. As to quaternary structure, component of a pre-mRNA cleavage factor complex. Interacts directly with PCF11.

The protein resides in the nucleus. Its function is as follows. Required for endonucleolytic cleavage during polyadenylation-dependent pre-mRNA 3'-end formation. The chain is mRNA cleavage and polyadenylation factor CLP1 from Cryptococcus neoformans var. neoformans serotype D (strain JEC21 / ATCC MYA-565) (Filobasidiella neoformans).